Reading from the N-terminus, the 420-residue chain is MGIFEEAKKYIVGGVNSPVRAFKSVGGEPPFIEKGEGAYIYDINGNKYLDYIQSWGPLIFGHCDKDIEKAICNAVSKGVSFGAPTTVEVELAKEVLDLFPHLDLIRFVNSGTEATMSAIRVARGVSGKDDIIKFEGCYHGHSDSLLVSAGSGAATFGTPSSPGVPADFTKHTLLAKYNDIESVKKCFENGNVGCVIIEPIAGNMSLVPAEKEFLTELRELCTKNGAILIFDEVMSGFRAGLRGSYDVYGIEADIVTFGKVIGGGMPVGAFAGKKVIMEQLSPEGPIYQAGTLSGNPVAMSAGLAMLKKLKSNPELYKDLESKAKKLMKGFEEISKENGIDIQTNVVGSMFGFFFNSKKPKNFDDVNESDTKRYAKFHSEMLKRGFYFAPSAYETGFICTVMNDTDIDATLNAYKEIAPSL.

Position 259 is an N6-(pyridoxal phosphate)lysine (K259).

The protein belongs to the class-III pyridoxal-phosphate-dependent aminotransferase family. HemL subfamily. Homodimer. The cofactor is pyridoxal 5'-phosphate.

Its subcellular location is the cytoplasm. It carries out the reaction (S)-4-amino-5-oxopentanoate = 5-aminolevulinate. The protein operates within porphyrin-containing compound metabolism; protoporphyrin-IX biosynthesis; 5-aminolevulinate from L-glutamyl-tRNA(Glu): step 2/2. The sequence is that of Glutamate-1-semialdehyde 2,1-aminomutase from Nautilia profundicola (strain ATCC BAA-1463 / DSM 18972 / AmH).